A 313-amino-acid polypeptide reads, in one-letter code: Phosphate import ATP-binding protein PstB 2 (313 aa).

Positions 1-33 (MSDSINTEPSTDTQTNGERTVETTSPSAETTAG) are enriched in polar residues. A disordered region spans residues 1–40 (MSDSINTEPSTDTQTNGERTVETTSPSAETTAGESEEQVR). In terms of domain architecture, ABC transporter spans 54–308 (LSVENLDVWY…PESQRVEDYI (255 aa)). 86–93 (GPSGCGKS) is an ATP binding site.

It belongs to the ABC transporter superfamily. Phosphate importer (TC 3.A.1.7) family. As to quaternary structure, the complex is composed of two ATP-binding proteins (PstB), two transmembrane proteins (PstC and PstA) and a solute-binding protein (PstS).

The protein resides in the cell membrane. The enzyme catalyses phosphate(out) + ATP + H2O = ADP + 2 phosphate(in) + H(+). Its function is as follows. Part of the ABC transporter complex PstSACB involved in phosphate import. Responsible for energy coupling to the transport system. This chain is Phosphate import ATP-binding protein PstB 2, found in Haloarcula marismortui (strain ATCC 43049 / DSM 3752 / JCM 8966 / VKM B-1809) (Halobacterium marismortui).